The primary structure comprises 256 residues: Glutamate racemase (256 aa).

Substrate contacts are provided by residues 11–12 (DS) and 43–44 (YG). C74 acts as the Proton donor/acceptor in catalysis. 75-76 (NT) is a substrate binding site. C182 acts as the Proton donor/acceptor in catalysis. Substrate is bound at residue 183-184 (TH).

It belongs to the aspartate/glutamate racemases family.

The catalysed reaction is L-glutamate = D-glutamate. It functions in the pathway cell wall biogenesis; peptidoglycan biosynthesis. In terms of biological role, provides the (R)-glutamate required for cell wall biosynthesis. This is Glutamate racemase from Leptospira interrogans serogroup Icterohaemorrhagiae serovar Lai (strain 56601).